A 312-amino-acid polypeptide reads, in one-letter code: Olfactory receptor 2M7 (312 aa).

At 1 to 25 (MAWENQTFNSDFLLLGIFNHSPTHT) the chain is on the extracellular side. The N-linked (GlcNAc...) asparagine glycan is linked to asparagine 5. Residues 26–49 (FLFFLVLAIFSVAFMGNSIMVLLI) traverse the membrane as a helical segment. Residues 50 to 57 (YLDTQLHT) are Cytoplasmic-facing. A helical membrane pass occupies residues 58 to 79 (PMYFLLSQLSLMDLMLICTTVP). Over 80-100 (KMAFNYLSGSKSISMAGCATQ) the chain is Extracellular. A disulfide bridge connects residues cysteine 97 and cysteine 189. A helical membrane pass occupies residues 101–120 (IFFYISLLGSECFLLAVMSY). The Cytoplasmic segment spans residues 121–139 (DRYTAICHPLRYTNLMRPK). Residues 140–158 (ICGLMTAFSWILGSTDGII) traverse the membrane as a helical segment. The Extracellular segment spans residues 159–195 (DAVATFSFSYCGSREIAHFCCDFPSLLILSCNDTSIF). Residues 196–219 (EEVIFICCIVMLVFPVAIIITSYA) traverse the membrane as a helical segment. The Cytoplasmic portion of the chain corresponds to 220-236 (RVILAVIHMGSGEGRRK). Residues 237–259 (AFTTCSSHLMVVGMYYGAGLFMC) form a helical membrane-spanning segment. Residues 260–272 (IQPTSHHSPMQDK) lie on the Extracellular side of the membrane. The helical transmembrane segment at 273-292 (MVSVFYTIVTPMLNPLIYSL) threads the bilayer. Over 293 to 311 (RNKEVTRALMKILGKGKSG) the chain is Cytoplasmic.

The protein belongs to the G-protein coupled receptor 1 family.

It is found in the cell membrane. Odorant receptor. In Homo sapiens (Human), this protein is Olfactory receptor 2M7 (OR2M7).